We begin with the raw amino-acid sequence, 339 residues long: UDP-N-acetylglucosamine--N-acetylmuramyl-(pentapeptide) pyrophosphoryl-undecaprenol N-acetylglucosamine transferase (339 aa).

UDP-N-acetyl-alpha-D-glucosamine contacts are provided by residues Thr10–Gly12, Asn124, Arg168, Ser188, Ile235, and Gln280.

The protein belongs to the glycosyltransferase 28 family. MurG subfamily.

The protein resides in the cell inner membrane. The enzyme catalyses di-trans,octa-cis-undecaprenyl diphospho-N-acetyl-alpha-D-muramoyl-L-alanyl-D-glutamyl-meso-2,6-diaminopimeloyl-D-alanyl-D-alanine + UDP-N-acetyl-alpha-D-glucosamine = di-trans,octa-cis-undecaprenyl diphospho-[N-acetyl-alpha-D-glucosaminyl-(1-&gt;4)]-N-acetyl-alpha-D-muramoyl-L-alanyl-D-glutamyl-meso-2,6-diaminopimeloyl-D-alanyl-D-alanine + UDP + H(+). The protein operates within cell wall biogenesis; peptidoglycan biosynthesis. In terms of biological role, cell wall formation. Catalyzes the transfer of a GlcNAc subunit on undecaprenyl-pyrophosphoryl-MurNAc-pentapeptide (lipid intermediate I) to form undecaprenyl-pyrophosphoryl-MurNAc-(pentapeptide)GlcNAc (lipid intermediate II). This Pseudothermotoga lettingae (strain ATCC BAA-301 / DSM 14385 / NBRC 107922 / TMO) (Thermotoga lettingae) protein is UDP-N-acetylglucosamine--N-acetylmuramyl-(pentapeptide) pyrophosphoryl-undecaprenol N-acetylglucosamine transferase.